The primary structure comprises 122 residues: Ig heavy chain V region M603 (122 aa).

The Ig-like domain occupies 1 to 121 (EVKLVESGGG…WGAGTTVTVS (121 aa)).

The polypeptide is Ig heavy chain V region M603 (Mus musculus (Mouse)).